Reading from the N-terminus, the 269-residue chain is Hydroxyethylthiazole kinase (269 aa).

M46 contacts substrate. ATP is bound by residues R122 and T168. G195 lines the substrate pocket.

The protein belongs to the Thz kinase family. Mg(2+) is required as a cofactor.

It catalyses the reaction 5-(2-hydroxyethyl)-4-methylthiazole + ATP = 4-methyl-5-(2-phosphooxyethyl)-thiazole + ADP + H(+). It functions in the pathway cofactor biosynthesis; thiamine diphosphate biosynthesis; 4-methyl-5-(2-phosphoethyl)-thiazole from 5-(2-hydroxyethyl)-4-methylthiazole: step 1/1. Its function is as follows. Catalyzes the phosphorylation of the hydroxyl group of 4-methyl-5-beta-hydroxyethylthiazole (THZ). The chain is Hydroxyethylthiazole kinase from Geobacillus thermodenitrificans (strain NG80-2).